Here is a 644-residue protein sequence, read N- to C-terminus: 3D-(3,5/4)-trihydroxycyclohexane-1,2-dione hydrolase (644 aa).

Residue Glu-65 participates in thiamine diphosphate binding. The tract at residues 442–522 is thiamine pyrophosphate binding; that stretch reads SLPGDLQRMW…INVLLFDNSG (81 aa). Residues Asp-493 and Asn-520 each coordinate Mg(2+).

It belongs to the TPP enzyme family. Mg(2+) serves as cofactor. It depends on thiamine diphosphate as a cofactor.

It carries out the reaction 3D-3,5/4-trihydroxycyclohexane-1,2-dione + H2O = 5-deoxy-D-glucuronate + H(+). The protein operates within polyol metabolism; myo-inositol degradation into acetyl-CoA; acetyl-CoA from myo-inositol: step 3/7. Involved in the cleavage of the C1-C2 bond of 3D-(3,5/4)-trihydroxycyclohexane-1,2-dione (THcHDO) to yield 5-deoxy-glucuronate (5DG). In Bacillus anthracis (strain A0248), this protein is 3D-(3,5/4)-trihydroxycyclohexane-1,2-dione hydrolase.